Here is an 877-residue protein sequence, read N- to C-terminus: DNA polymerase I (877 aa).

The region spanning 1-310 (MKKKLVLIDG…FTLADRVTEE (310 aa)) is the 5'-3' exonuclease domain. A 3'-5' exonuclease domain is found at 311–465 (MLADKAALVV…ALERPFLDEL (155 aa)). The segment at 469–877 (EQDRLLVELE…HYGSTWYDAK (409 aa)) is polymerase.

It belongs to the DNA polymerase type-A family. As to quaternary structure, single-chain monomer with multiple functions.

The catalysed reaction is DNA(n) + a 2'-deoxyribonucleoside 5'-triphosphate = DNA(n+1) + diphosphate. Functionally, in addition to polymerase activity, this DNA polymerase exhibits 3'-5' and 5'-3' exonuclease activity. The protein is DNA polymerase I (polA) of Bacillus caldotenax.